The chain runs to 629 residues: Rho GTPase-activating protein conundrum (629 aa).

The interval 185 to 294 (PPKSGTYADI…CRDSSSLDSC (110 aa)) is required for interaction with Moe. Positions 237–261 (SIGRSKESRSENDARSQKKKSSEVL) are disordered. Positions 240-258 (RSKESRSENDARSQKKKSS) are enriched in basic and acidic residues. The 207-residue stretch at 359 to 565 (VSINALIRRD…ILILRGEKLF (207 aa)) folds into the Rho-GAP domain.

Interacts with Moe (via FERM domain).

It localises to the cytoplasm. The protein resides in the cell membrane. The protein localises to the cell cortex. Its subcellular location is the cell junction. Its function is as follows. GTPase-activating protein (GAP) for Rho1; functions with the ERM protein Moe to regulate Rho1 and control proliferation in the developing epithelium. Recruited by Moe to the cell cortex where it negatively regulates Rho1 activity. Can also promote cell proliferation independently of its GAP activity, perhaps by acting with Arf6 to positively regulate Rac1. The chain is Rho GTPase-activating protein conundrum from Drosophila melanogaster (Fruit fly).